The primary structure comprises 474 residues: AAA-ATPase At3g28610 (474 aa).

The N-terminal stretch at 1-25 (MMGNMFGSSLASLFFLWATIQQIFP) is a signal peptide. 244-251 (GPPGTGKS) contacts ATP.

This sequence belongs to the AAA ATPase family. BCS1 subfamily. Mg(2+) serves as cofactor.

It catalyses the reaction ATP + H2O = ADP + phosphate + H(+). In Arabidopsis thaliana (Mouse-ear cress), this protein is AAA-ATPase At3g28610.